The sequence spans 187 residues: MRIRLATNNPYKLAEVSHILAPFCIEVERLDAEKVEIQHDDVVVIARKAAEFLCSRYGDFVVVDDTGLYIEALGGFPGPYAEYVYRTIGLKGVLKLLEGAADRRATFKCAAAICIGGRVEVFVGEVRGYIAHEPRGRGGFGYDPIFIPEGMTATYAELGEEVKNKISHRAKAFSQLGAWLTNRNLFK.

Residue 7-12 coordinates substrate; that stretch reads TNNPYK. 2 residues coordinate Mg(2+): Glu-36 and Asp-65. Residue Asp-65 is the Proton acceptor of the active site. Substrate is bound by residues Thr-66, 140-143, Lys-163, and 168-169; these read FGYD and HR.

Belongs to the HAM1 NTPase family. In terms of assembly, homodimer. Mg(2+) is required as a cofactor.

It carries out the reaction XTP + H2O = XMP + diphosphate + H(+). The enzyme catalyses dITP + H2O = dIMP + diphosphate + H(+). The catalysed reaction is ITP + H2O = IMP + diphosphate + H(+). Pyrophosphatase that catalyzes the hydrolysis of nucleoside triphosphates to their monophosphate derivatives, with a high preference for the non-canonical purine nucleotides XTP (xanthosine triphosphate), dITP (deoxyinosine triphosphate) and ITP. Seems to function as a house-cleaning enzyme that removes non-canonical purine nucleotides from the nucleotide pool, thus preventing their incorporation into DNA/RNA and avoiding chromosomal lesions. The chain is dITP/XTP pyrophosphatase from Pyrobaculum aerophilum (strain ATCC 51768 / DSM 7523 / JCM 9630 / CIP 104966 / NBRC 100827 / IM2).